A 347-amino-acid chain; its full sequence is NADH-ubiquinone oxidoreductase chain 2 (347 aa).

Helical transmembrane passes span 3 to 23, 59 to 79, 95 to 115, 127 to 147, 149 to 169, 178 to 198, 200 to 220, 241 to 261, 274 to 294, and 325 to 345; these read PLTLIIIMFTLFMGTMITVFS, YFLTQATASMILMMAITLNIL, PVLITLALIIKLGMAPFHFWV, GLILLTWQKLAPLSILYQISP, INPTMMMSVAILSIMVGGWGG, ILAYSSIAHMGWMAAIITFNP, TMVLNLIIYILMTIPMFMMFM, VSTILITLMSLGGLPPLTGFI, GNIILPTAMAMLALLNLYFYM, and LITPLIILSTMLLPLTPALSV.

It belongs to the complex I subunit 2 family. Core subunit of respiratory chain NADH dehydrogenase (Complex I) which is composed of 45 different subunits. Interacts with TMEM242.

It localises to the mitochondrion inner membrane. It catalyses the reaction a ubiquinone + NADH + 5 H(+)(in) = a ubiquinol + NAD(+) + 4 H(+)(out). Its function is as follows. Core subunit of the mitochondrial membrane respiratory chain NADH dehydrogenase (Complex I) which catalyzes electron transfer from NADH through the respiratory chain, using ubiquinone as an electron acceptor. Essential for the catalytic activity and assembly of complex I. The sequence is that of NADH-ubiquinone oxidoreductase chain 2 from Oryctolagus cuniculus (Rabbit).